Consider the following 266-residue polypeptide: Glucosamine-6-phosphate deaminase 1 (266 aa).

The active-site Proton acceptor; for enolization step is the aspartate 67. The For ring-opening step role is filled by asparagine 136. The active-site Proton acceptor; for ring-opening step is the histidine 138. Glutamate 143 serves as the catalytic For ring-opening step.

Belongs to the glucosamine/galactosamine-6-phosphate isomerase family. In terms of assembly, homohexamer.

The protein resides in the cytoplasm. The catalysed reaction is alpha-D-glucosamine 6-phosphate + H2O = beta-D-fructose 6-phosphate + NH4(+). In terms of biological role, catalyzes the reversible conversion of alpha-D-glucosamine 6-phosphate (GlcN-6P) into beta-D-fructose 6-phosphate (Fru-6P) and ammonium ion, a regulatory reaction step in de novo uridine diphosphate-N-acetyl-alpha-D-glucosamine (UDP-GlcNAc) biosynthesis via hexosamine pathway. In Giardia intestinalis (Giardia lamblia), this protein is Glucosamine-6-phosphate deaminase 1 (GPI1).